Reading from the N-terminus, the 395-residue chain is Putative pyridoxal phosphate-dependent acyltransferase (395 aa).

110–111 (GF) is a pyridoxal 5'-phosphate binding site. His135 is a substrate binding site. Residues Ser185, 210–213 (DDAH), and 240–243 (TLSK) contribute to the pyridoxal 5'-phosphate site. Position 243 is an N6-(pyridoxal phosphate)lysine (Lys243). Thr357 is a substrate binding site.

This sequence belongs to the class-II pyridoxal-phosphate-dependent aminotransferase family. Homodimer. Pyridoxal 5'-phosphate is required as a cofactor.

In Staphylococcus aureus (strain COL), this protein is Putative pyridoxal phosphate-dependent acyltransferase.